The following is a 273-amino-acid chain: Testis-specific serine/threonine-protein kinase 6 (273 aa).

In terms of domain architecture, Protein kinase spans 12-267 (YKLGRTIGEG…AGQVARNGWL (256 aa)). Residues 18–26 (IGEGSYSKV) and Lys-41 each bind ATP. Asp-135 (proton acceptor) is an active-site residue.

It belongs to the protein kinase superfamily. CAMK Ser/Thr protein kinase family. In terms of assembly, microtubule inner protein component of sperm flagellar doublet microtubules. Interacts with HSP90; this interaction stabilizes and activates TSSK6. Interacts with the heat shock proteins HSPCB, HSPA8 and HSPA1A. These interactions appear to be required for TSSK6 kinase activity. Interacts with TSACC; this interaction is direct and recruits TSACC to HSP90, which is essential for kinase activity. Requires Mg(2+) as cofactor. Post-translationally, autophosphorylated. In terms of processing, ubiquitinated; HSP90 activity negatively regulates ubiquitination and degradation. In terms of tissue distribution, expressed in the testis, localized to the heads of elongating spermatids.

It is found in the cytoplasm. The protein resides in the cytoskeleton. Its subcellular location is the flagellum axoneme. The protein localises to the nucleus. The catalysed reaction is L-seryl-[protein] + ATP = O-phospho-L-seryl-[protein] + ADP + H(+). It catalyses the reaction L-threonyl-[protein] + ATP = O-phospho-L-threonyl-[protein] + ADP + H(+). Its function is as follows. Serine/threonine-protein kinase component of the sperm flagellar doublet microtubules. May act as a regulator of sperm motility by mediating phosphorylation of sperm doublet microtubule proteins. Plays a role in DNA condensation during postmeiotic chromatin remodeling and histone-to-protamine transition during spermatogenesis. In Mus musculus (Mouse), this protein is Testis-specific serine/threonine-protein kinase 6.